We begin with the raw amino-acid sequence, 482 residues long: Putative metabolite transport protein YfiG (482 aa).

The Cytoplasmic segment spans residues Met1–Thr29. Residues Phe30–Ala50 traverse the membrane as a helical segment. Residues Thr51–Pro59 lie on the Extracellular side of the membrane. A helical transmembrane segment spans residues Val60 to Gly80. At Gly81–Thr92 the chain is on the cytoplasmic side. The chain crosses the membrane as a helical span at residues Ile93–Ala113. Residues Ser114–Arg120 are Extracellular-facing. The chain crosses the membrane as a helical span at residues Phe121–Ile141. Residues Ser142 to Glu155 lie on the Cytoplasmic side of the membrane. A helical transmembrane segment spans residues Leu156–Met176. Residues Gly177 to Arg184 are Extracellular-facing. The helical transmembrane segment at Tyr185–Pro205 threads the bilayer. Residues Glu206–Arg263 lie on the Cytoplasmic side of the membrane. The helical transmembrane segment at Ile264–Met284 threads the bilayer. The Extracellular segment spans residues Tyr285–Ala301. The helical transmembrane segment at Leu302–Leu322 threads the bilayer. Over Leu323–Met331 the chain is Cytoplasmic. A run of 2 helical transmembrane segments spans residues Leu332–Val352 and Leu353–Phe373. Residues Gln374–Gly400 lie on the Cytoplasmic side of the membrane. A helical membrane pass occupies residues Ile401–Leu421. Topologically, residues Asn422–His423 are extracellular. The helical transmembrane segment at Ile424 to Val444 threads the bilayer. The Cytoplasmic portion of the chain corresponds to Lys445 to Ser482.

The protein belongs to the major facilitator superfamily. Sugar transporter (TC 2.A.1.1) family.

Its subcellular location is the cell membrane. This is Putative metabolite transport protein YfiG (yfiG) from Bacillus subtilis (strain 168).